The sequence spans 105 residues: TMEM14 protein homolog YJR085C (105 aa).

The next 3 membrane-spanning stretches (helical) occupy residues 26-46 (IPSL…GYLL), 53-73 (GLEM…IRGM), and 77-97 (FTKP…YYYY).

This sequence belongs to the TMEM14 family.

The protein localises to the mitochondrion. Its subcellular location is the membrane. The polypeptide is TMEM14 protein homolog YJR085C (Saccharomyces cerevisiae (strain ATCC 204508 / S288c) (Baker's yeast)).